An 877-amino-acid polypeptide reads, in one-letter code: Probable sulfate permease C3H7.02 (877 aa).

13 helical membrane passes run 133–153 (WLVY…PQGM), 161–181 (LPAQ…CIFA), 186–206 (VSIG…ANVQ), 221–241 (LALL…GFII), 243–263 (FIPV…IMAG), 292–312 (LPHT…LYLV), 329–349 (VFFL…TAIS), 384–404 (LCAD…LEHI), 424–444 (LIAM…PATG), 461–481 (LGGI…TGAF), 484–504 (IPNA…IIPW), 518–538 (ALIF…NGIY), and 543–563 (LSAA…LGIL). The 154-residue stretch at 594–747 (NLTVRDPPAG…SRSIEVGSAA (154 aa)) folds into the STAS domain. Disordered regions lie at residues 643–663 (KASD…APEV) and 793–821 (ADSD…TFSH). Positions 801–821 (SDDKDKKVEGHRPSQDPTFSH) are enriched in basic and acidic residues.

It belongs to the SLC26A/SulP transporter (TC 2.A.53) family.

The protein resides in the membrane. In terms of biological role, high affinity uptake of sulfate into the cell. In Schizosaccharomyces pombe (strain 972 / ATCC 24843) (Fission yeast), this protein is Probable sulfate permease C3H7.02.